Reading from the N-terminus, the 325-residue chain is ATP synthase subunit gamma, mitochondrial (325 aa).

The N-terminal 42 residues, 1–42 (MAMAVFRREGRRLLPSIAARPIAAIRSPLSSDQEEGLLGVRS), are a transit peptide targeting the mitochondrion.

It belongs to the ATPase gamma chain family. As to quaternary structure, F-type ATPases have 2 components, CF(1) - the catalytic core - and CF(0) - the membrane proton channel. CF(1) has five subunits: alpha(3), beta(3), gamma(1), delta(1), epsilon(1). CF(0) has three main subunits: a, b and c.

The protein resides in the mitochondrion. Its subcellular location is the mitochondrion inner membrane. Functionally, mitochondrial membrane ATP synthase (F(1)F(0) ATP synthase or Complex V) produces ATP from ADP in the presence of a proton gradient across the membrane which is generated by electron transport complexes of the respiratory chain. F-type ATPases consist of two structural domains, F(1) - containing the extramembraneous catalytic core, and F(0) - containing the membrane proton channel, linked together by a central stalk and a peripheral stalk. During catalysis, ATP synthesis in the catalytic domain of F(1) is coupled via a rotary mechanism of the central stalk subunits to proton translocation. Part of the complex F(1) domain and the central stalk which is part of the complex rotary element. The gamma subunit protrudes into the catalytic domain formed of alpha(3)beta(3). Rotation of the central stalk against the surrounding alpha(3)beta(3) subunits leads to hydrolysis of ATP in three separate catalytic sites on the beta subunits. This is ATP synthase subunit gamma, mitochondrial (ATPC) from Arabidopsis thaliana (Mouse-ear cress).